Here is a 982-residue protein sequence, read N- to C-terminus: MNQIPMQYFNLAKENYSKYGLSVIQLIQIGKFYELWHEPDTSSKQQAYSQAELLVESSIRSRSLEVTPPIEQVASLLDMKIISLGKRSLLQMGFPVYSLTTHLSTLLDKGWTVIVIDELVTNKSGPKQRAVSQVYSPSCNLEDCPELPYVLSIYFSQDDLLGITLFSAMNGHSIIFPVSWTDRDKVTRLLISYHIREIVIWADSGVCSNILINKIYNLLIGWNLFPSEPNAKIEAMGEILTNLPCYLSYRYENNSKEWLLLHIYIGINTEWLNKNYQKYTLSKIFQSTWTENVNQANLISLLGVLQFIKDRNPNLIKNLQLPECYNSVVSPLNLILCNRAEYQLDLLSKRGKLGGLLNLIDYCSTAMGKRLLKFRLLNPITDYSELNLRYKDISIFKRLLNQKIFDNSELKCIKDLSSLHRQWAICASSDTTLPPKKLSQIYHSYLFACQLISKLTNNIQLPPLVGPQLKSLIKEIERIFQVDSLLGDFKDVIQPIGNLPNLFEQRQTLRAQLTEWAEQISNIVFQDTTSIKAEYFNKEGYAFSISSKKLTKLEHYMMNTSISNNSIIVLGKRGSHHIITSPTIHKVSIELNELEEQINIYVKQTYHQELKRLYFSYSELFLPLVNMISRLDVALSGAITAIKFNYVEPCLTLAKTQQTKGFIEAANLRHPLVEQLNTQEECIAHNISLEDKGMLVFSVNGAGKSTLLRAIGVNVILAQAGMYVAADSFKLRPYNYLITRILGGDDLYRGQGTFEVEMRDLSTILQLANYNSLILGDEICHGTEVNSGTAILAATIERLINAQTSFVLSTHLHQVCSLIDSPVRYYHLSVIQQENSALIYERKLKPGPGPSQYGIEVMGHIINDKKFYNSALKYRKLINWEPPSQGELTVFRPSKYNAQVFIDSCEICGAPADAVHHIKPKSEHKKLCNRKLNRRSNLVPVCSSCHLDIHRNKISILGWKRTPKHKKLYWVYTNESLDSGTK.

Position 698 to 705 (698 to 705 (SVNGAGKS)) interacts with ATP. In terms of domain architecture, HNH spans 905-951 (CEICGAPADAVHHIKPKSEHKKLCNRKLNRRSNLVPVCSSCHLDIHR).

This sequence belongs to the DNA mismatch repair MutS family.

Its subcellular location is the mitochondrion. In terms of biological role, may be involved in DNA-mismatch repair. The sequence is that of Mitochondrial DNA mismatch repair protein mutS homolog from Sarcophyton glaucum (Toadstool umbrella leather coral).